Here is a 163-residue protein sequence, read N- to C-terminus: Secreted RxLR effector protein 135 (163 aa).

An N-terminal signal peptide occupies residues M1–G20. Residues R33–R45 carry the RxLR-dEER motif. Residues K94–G127 are disordered.

This sequence belongs to the RxLR effector family.

Its subcellular location is the secreted. The protein localises to the host nucleus. It localises to the host cytoplasm. Its function is as follows. Secreted effector that completely suppresses the host cell death induced by cell death-inducing proteins. The sequence is that of Secreted RxLR effector protein 135 from Plasmopara viticola (Downy mildew of grapevine).